We begin with the raw amino-acid sequence, 794 residues long: Phenylalanine--tRNA ligase beta subunit (794 aa).

The tRNA-binding domain occupies 39–154 (SSSFSSIITA…ANTPLGESAC (116 aa)). The B5 domain occupies 403–481 (PPSPTLTLRT…QPWKIEKKKA (79 aa)). Mg(2+)-binding residues include Asp-457, Asp-463, Glu-466, and Glu-467. In terms of domain architecture, FDX-ACB spans 697 to 793 (PIYPSSFRDI…QLDDTKGTID (97 aa)).

Belongs to the phenylalanyl-tRNA synthetase beta subunit family. Type 1 subfamily. In terms of assembly, tetramer of two alpha and two beta subunits. Requires Mg(2+) as cofactor.

It is found in the cytoplasm. It carries out the reaction tRNA(Phe) + L-phenylalanine + ATP = L-phenylalanyl-tRNA(Phe) + AMP + diphosphate + H(+). In Chlamydia abortus (strain DSM 27085 / S26/3) (Chlamydophila abortus), this protein is Phenylalanine--tRNA ligase beta subunit.